The chain runs to 258 residues: Ribonuclease HII (258 aa).

The disordered stretch occupies residues 1–20 (MRVAPSGGPPHHHAMIRATP). Positions 10–20 (PHHHAMIRATP) are enriched in basic residues. An RNase H type-2 domain is found at 48–236 (WPVAGCDEVG…VVAARERHRA (189 aa)). Residues Asp-54, Glu-55, and Asp-145 each coordinate a divalent metal cation.

It belongs to the RNase HII family. Mn(2+) is required as a cofactor. Requires Mg(2+) as cofactor.

It is found in the cytoplasm. The catalysed reaction is Endonucleolytic cleavage to 5'-phosphomonoester.. Endonuclease that specifically degrades the RNA of RNA-DNA hybrids. In Nitrobacter winogradskyi (strain ATCC 25391 / DSM 10237 / CIP 104748 / NCIMB 11846 / Nb-255), this protein is Ribonuclease HII.